A 317-amino-acid polypeptide reads, in one-letter code: Retinol dehydrogenase 16 (317 aa).

Residue 33-57 (FITGCDSGFGTLLARQLDRRGMRVL) coordinates NAD(+). Y176 functions as the Proton acceptor in the catalytic mechanism. A helical membrane pass occupies residues 289-309 (LFYLPLSYLPTFLVDALLYWT).

It belongs to the short-chain dehydrogenases/reductases (SDR) family. Homodimer. In terms of processing, not glycosylated.

It is found in the endoplasmic reticulum membrane. The protein localises to the microsome membrane. It carries out the reaction all-trans-retinol--[retinol-binding protein] + NAD(+) = all-trans-retinal--[retinol-binding protein] + NADH + H(+). The catalysed reaction is 9-cis-retinol + NAD(+) = 9-cis-retinal + NADH + H(+). It catalyses the reaction 11-cis-retinol + NAD(+) = 11-cis-retinal + NADH + H(+). The enzyme catalyses 13-cis-retinol + NAD(+) = 13-cis-retinal + NADH + H(+). It carries out the reaction androsterone + NAD(+) = 5alpha-androstan-3,17-dione + NADH + H(+). The catalysed reaction is 5alpha-androstane-3alpha,17beta-diol + NAD(+) = 17beta-hydroxy-5alpha-androstan-3-one + NADH + H(+). The protein operates within cofactor metabolism; retinol metabolism. Its function is as follows. Oxidoreductase with a preference for NAD. Oxidizes all-trans-retinol, 9-cis-retinol, 11-cis-retinol and 13-cis-retinol to the corresponding aldehydes. Has higher activity towards CRBP-bound retinol than with free retinol. Oxidizes 3-alpha-hydroxysteroids. Oxidizes androstanediol and androsterone to dihydrotestosterone and androstanedione. Can also catalyze the reverse reaction. In Mus musculus (Mouse), this protein is Retinol dehydrogenase 16.